The sequence spans 1012 residues: MRRSTDPRNLLVRRGPLLVDGESAISELDPGFFPTGDAPKMSSTTRRRFNLIAFTPGPVTVISSLVYLALLIPLLLVHTIVPSAPKSNPKGVDLSEAWNDLQHLTSGFHPYNSHRNDEIHQWLLQRVGHILDASRKAHEDDAMGSVAPDVFVFDDQQSNLTFSGGGVGNKPITGVYFEGKNIIVYIRGLEDDKENWWDSPGGKPKGKGGVLVNAHYDSVSTGFGATDDGVGVVSVLQLIKFFTSPGNLPRKGLVLLLNNGEEDYLNGARAYSQHPLSKYTHTFLNLEGAGAGGRAALFRTTDTEVTRFYKSSPHPFGSVLAADGFKMGLIRSETDYAVFKGVLGLRGLDVAFIEPRARYHTDQDDVRHTSIDSVWHMLSAAIATTKGLVSYTGSEFDGRAPGKGMVNSGVGTHGVWFDLFGSSFAVFRLHTLFAISVTLLVVCPIVLFVIGIILSKMDKMYLFSIHETIPETKEKVSVRGLRGLFRYPIILVVSSGILIGLSYLLAKVNPFIVHSSSYAVWSMMLSSWIFMTWFLSCIADFFRPSALHRAYTFTWQLLVMWVLLVISTVYVNQHDIAAGYFIVFYFAGTFLATLISYLELFALPNKTQYAREQSQYPSRLGSNRSSRILSPSADELPTGGDNNGEIYDGEEEPTESSSLLGRQRRTTFANYTRTGRDLASSESGTYEDHSETGVFGEEQKWSASLPTWTWVLQFLFVGPVVIMFIGQLGLFLTSAMNQVGADGVGLLVVYIAIAVFSVLLLIPLSPFIHRFTYHVPTFLLLVFIATLIYNLAAFPFSAENRLKIFFVQELNLDTGRNQVSLTGVDPYVQDIIRAIPSASKENISCDSELDSGRRKCSWPGLAPEVVQDEPTDRWLSFNISKPSSQETKDTPVLHARLHVSGKNTRACRVNFERPIRDYSLPGSALDDRMPHTLPQGISEIRLWSRTWENVWTVDVQWDAEDMDELHGRVVCLWSDANQLGSIPALDELRLFAPPWVAISKLKDGLVEVSRGF.

Over 1–60 (MRRSTDPRNLLVRRGPLLVDGESAISELDPGFFPTGDAPKMSSTTRRRFNLIAFTPGPVT) the chain is Cytoplasmic. A helical membrane pass occupies residues 61–81 (VISSLVYLALLIPLLLVHTIV). Residues 82-432 (PSAPKSNPKG…SFAVFRLHTL (351 aa)) are Vacuolar-facing. N-linked (GlcNAc...) asparagine glycosylation occurs at Asn159. Zn(2+) contacts are provided by His215 and Asp227. Glu261 functions as the Proton acceptor in the catalytic mechanism. Zn(2+)-binding residues include Glu262, Glu287, and His360. A helical transmembrane segment spans residues 433 to 453 (FAISVTLLVVCPIVLFVIGII). At 454-487 (LSKMDKMYLFSIHETIPETKEKVSVRGLRGLFRY) the chain is on the cytoplasmic side. The chain crosses the membrane as a helical span at residues 488-508 (PIILVVSSGILIGLSYLLAKV). Topologically, residues 509-518 (NPFIVHSSSY) are vacuolar. The helical transmembrane segment at 519 to 539 (AVWSMMLSSWIFMTWFLSCIA) threads the bilayer. Residues 540-550 (DFFRPSALHRA) are Cytoplasmic-facing. The chain crosses the membrane as a helical span at residues 551 to 571 (YTFTWQLLVMWVLLVISTVYV). Residues 572–575 (NQHD) lie on the Vacuolar side of the membrane. A helical transmembrane segment spans residues 576–596 (IAAGYFIVFYFAGTFLATLIS). Over 597-710 (YLELFALPNK…WSASLPTWTW (114 aa)) the chain is Cytoplasmic. Residues 614-629 (SQYPSRLGSNRSSRIL) are compositionally biased toward polar residues. Positions 614 to 660 (SQYPSRLGSNRSSRILSPSADELPTGGDNNGEIYDGEEEPTESSSLL) are disordered. A helical transmembrane segment spans residues 711–731 (VLQFLFVGPVVIMFIGQLGLF). Topologically, residues 732–743 (LTSAMNQVGADG) are vacuolar. A helical membrane pass occupies residues 744–764 (VGLLVVYIAIAVFSVLLLIPL). The Cytoplasmic portion of the chain corresponds to 765–777 (SPFIHRFTYHVPT). A helical membrane pass occupies residues 778–798 (FLLLVFIATLIYNLAAFPFSA). The Vacuolar segment spans residues 799–1012 (ENRLKIFFVQ…DGLVEVSRGF (214 aa)). N-linked (GlcNAc...) asparagine glycans are attached at residues Asn842 and Asn878.

It belongs to the peptidase M28 family. It depends on Zn(2+) as a cofactor.

It is found in the vacuole membrane. In terms of biological role, may be involved in vacuolar sorting and osmoregulation. This chain is Vacuolar membrane protease, found in Coccidioides posadasii (strain RMSCC 757 / Silveira) (Valley fever fungus).